The chain runs to 296 residues: Bifunctional protein FolD (296 aa).

NADP(+) contacts are provided by residues 166–168, S191, and I232; that span reads GRS.

It belongs to the tetrahydrofolate dehydrogenase/cyclohydrolase family. As to quaternary structure, homodimer.

It catalyses the reaction (6R)-5,10-methylene-5,6,7,8-tetrahydrofolate + NADP(+) = (6R)-5,10-methenyltetrahydrofolate + NADPH. It carries out the reaction (6R)-5,10-methenyltetrahydrofolate + H2O = (6R)-10-formyltetrahydrofolate + H(+). It participates in one-carbon metabolism; tetrahydrofolate interconversion. Catalyzes the oxidation of 5,10-methylenetetrahydrofolate to 5,10-methenyltetrahydrofolate and then the hydrolysis of 5,10-methenyltetrahydrofolate to 10-formyltetrahydrofolate. This Cereibacter sphaeroides (strain ATCC 17023 / DSM 158 / JCM 6121 / CCUG 31486 / LMG 2827 / NBRC 12203 / NCIMB 8253 / ATH 2.4.1.) (Rhodobacter sphaeroides) protein is Bifunctional protein FolD.